The chain runs to 154 residues: Xanthine-guanine phosphoribosyltransferase (154 aa).

5-phospho-alpha-D-ribose 1-diphosphate contacts are provided by residues 37 to 38 (RG), Arg69, and 88 to 96 (DDLVDSGDT). Arg69 is a binding site for GMP. Asp89 is a Mg(2+) binding site. Guanine contacts are provided by Asp92 and Ile135. Residues Asp92 and Ile135 each coordinate xanthine. GMP-binding positions include 92 to 96 (DSGDT) and 134 to 135 (WI).

It belongs to the purine/pyrimidine phosphoribosyltransferase family. XGPT subfamily. Homotetramer. Mg(2+) is required as a cofactor.

It is found in the cell inner membrane. The catalysed reaction is GMP + diphosphate = guanine + 5-phospho-alpha-D-ribose 1-diphosphate. It catalyses the reaction XMP + diphosphate = xanthine + 5-phospho-alpha-D-ribose 1-diphosphate. It carries out the reaction IMP + diphosphate = hypoxanthine + 5-phospho-alpha-D-ribose 1-diphosphate. It participates in purine metabolism; GMP biosynthesis via salvage pathway; GMP from guanine: step 1/1. It functions in the pathway purine metabolism; XMP biosynthesis via salvage pathway; XMP from xanthine: step 1/1. Its function is as follows. Purine salvage pathway enzyme that catalyzes the transfer of the ribosyl-5-phosphate group from 5-phospho-alpha-D-ribose 1-diphosphate (PRPP) to the N9 position of the 6-oxopurines guanine and xanthine to form the corresponding ribonucleotides GMP (guanosine 5'-monophosphate) and XMP (xanthosine 5'-monophosphate), with the release of PPi. To a lesser extent, also acts on hypoxanthine. This is Xanthine-guanine phosphoribosyltransferase from Vibrio cholerae serotype O1 (strain ATCC 39541 / Classical Ogawa 395 / O395).